The primary structure comprises 583 residues: Protein disulfide-isomerase-like protein of the testis (583 aa).

Residues 1 to 17 form the signal peptide; that stretch reads MDLLWMPLLLVAARISA. 4 N-linked (GlcNAc...) asparagine glycosylation sites follow: Asn58, Asn128, Asn160, and Asn340. In terms of domain architecture, Thioredoxin spans 388–451; the sequence is LVKQLVGKNF…IAKIDITAND (64 aa). Basic and acidic residues-rich tracts occupy residues 522 to 531 and 540 to 559; these read EVPMMKKELP and NVTK…KTSE. Positions 522-583 are disordered; it reads EVPMMKKELP…KKKPKVKEEL (62 aa). Asn540 is a glycosylation site (N-linked (GlcNAc...) asparagine). A compositionally biased stretch (basic residues) spans 573–583; sequence QKKKPKVKEEL. The short motif at 580–583 is the Prevents secretion from ER element; sequence KEEL.

This sequence belongs to the protein disulfide isomerase family. Homodimer. The homodimer is not disulfide-linked. Interacts with ERO1A and CLGN. N-glycosylated.

It is found in the endoplasmic reticulum. Its function is as follows. Probable redox-inactive chaperone involved in spermatogenesis. The protein is Protein disulfide-isomerase-like protein of the testis (PDILT) of Macaca fascicularis (Crab-eating macaque).